The following is a 172-amino-acid chain: uncharacterized protein (172 aa).

This is an uncharacterized protein from Bacillus subtilis (strain 168).